A 284-amino-acid polypeptide reads, in one-letter code: Proton-translocating ferredoxin:NAD(+) oxidoreductase complex subunit B (284 aa).

The tract at residues Met1–Asn26 is hydrophobic. The 4Fe-4S domain occupies Glu32–Lys92. [4Fe-4S] cluster contacts are provided by Cys49, Cys52, Cys57, Cys75, Cys138, Cys142, Cys148, Cys152, Cys172, Cys175, Cys178, Cys182, Cys217, Cys220, Cys223, Cys227, Cys246, Cys249, Cys254, and Cys258. 4Fe-4S ferredoxin-type domains are found at residues Gly133–Asn162, Gly163–Val192, Gly206–Asn237, and Ala239–Gly269.

The protein belongs to the 4Fe4S bacterial-type ferredoxin family. RnfB subfamily. As to quaternary structure, the complex is composed of six subunits: RnfA, RnfB, RnfC, RnfD, RnfE and RnfG. The cofactor is [4Fe-4S] cluster.

Its subcellular location is the cell membrane. Part of a membrane-bound complex that couples electron transfer with translocation of ions across the membrane. Couples electron transfer from reduced ferredoxin to NAD(+) with translocation of H(+) out of the cell. Essential for energy conservation during autotrophic growth. Contributes to ATP synthesis during heterotrophic growth. The chain is Proton-translocating ferredoxin:NAD(+) oxidoreductase complex subunit B from Clostridium ljungdahlii (strain ATCC 55383 / DSM 13528 / PETC).